A 265-amino-acid chain; its full sequence is Hydroxyacylglutathione hydrolase (265 aa).

Zn(2+)-binding residues include histidine 53, histidine 55, aspartate 57, histidine 58, histidine 109, aspartate 126, and histidine 164.

Belongs to the metallo-beta-lactamase superfamily. Glyoxalase II family. Monomer. It depends on Zn(2+) as a cofactor.

It carries out the reaction an S-(2-hydroxyacyl)glutathione + H2O = a 2-hydroxy carboxylate + glutathione + H(+). It functions in the pathway secondary metabolite metabolism; methylglyoxal degradation; (R)-lactate from methylglyoxal: step 2/2. Thiolesterase that catalyzes the hydrolysis of S-D-lactoyl-glutathione to form glutathione and D-lactic acid. The polypeptide is Hydroxyacylglutathione hydrolase (Dechloromonas aromatica (strain RCB)).